A 419-amino-acid chain; its full sequence is Gamma-glutamyl phosphate reductase (419 aa).

This sequence belongs to the gamma-glutamyl phosphate reductase family.

The protein localises to the cytoplasm. It catalyses the reaction L-glutamate 5-semialdehyde + phosphate + NADP(+) = L-glutamyl 5-phosphate + NADPH + H(+). It participates in amino-acid biosynthesis; L-proline biosynthesis; L-glutamate 5-semialdehyde from L-glutamate: step 2/2. Its function is as follows. Catalyzes the NADPH-dependent reduction of L-glutamate 5-phosphate into L-glutamate 5-semialdehyde and phosphate. The product spontaneously undergoes cyclization to form 1-pyrroline-5-carboxylate. This is Gamma-glutamyl phosphate reductase from Caldicellulosiruptor saccharolyticus (strain ATCC 43494 / DSM 8903 / Tp8T 6331).